A 163-amino-acid polypeptide reads, in one-letter code: Centrosomal protein of 19 kDa (163 aa).

It belongs to the CEP19 family. In terms of assembly, interacts with CEP43; this interaction is required for its localization to the mother centriole. Interacts (via residues 121-150) with RABL2B. Interacts (via C-terminus) with CEP350; this interaction is required for its localization to the mother centriole.

The protein localises to the cytoplasm. Its subcellular location is the cytoskeleton. It localises to the microtubule organizing center. The protein resides in the centrosome. It is found in the centriole. The protein localises to the spindle pole. Its subcellular location is the cilium basal body. In terms of biological role, required for ciliation. Recruits the RABL2B GTPase to the ciliary base to initiate ciliation. After specifically capturing the activated GTP-bound RABL2B, the CEP19-RABL2B complex binds intraflagellar transport (IFT) complex B from the large pool pre-docked at the base of the cilium and thus triggers its entry into the cilia. Involved in the early steps in cilia formation by recruiting the ciliary vesicles (CVs) to the distal end of the mother centriole where they fuse to initiate cilium assembly. Involved in microtubule (MT) anchoring to the centrosomes. The sequence is that of Centrosomal protein of 19 kDa (CEP19) from Homo sapiens (Human).